The following is a 269-amino-acid chain: Ubiquinone/menaquinone biosynthesis C-methyltransferase UbiE (269 aa).

S-adenosyl-L-methionine contacts are provided by residues T92, D113, and 141–142 (NA).

This sequence belongs to the class I-like SAM-binding methyltransferase superfamily. MenG/UbiE family.

The catalysed reaction is a 2-demethylmenaquinol + S-adenosyl-L-methionine = a menaquinol + S-adenosyl-L-homocysteine + H(+). It catalyses the reaction a 2-methoxy-6-(all-trans-polyprenyl)benzene-1,4-diol + S-adenosyl-L-methionine = a 5-methoxy-2-methyl-3-(all-trans-polyprenyl)benzene-1,4-diol + S-adenosyl-L-homocysteine + H(+). It participates in quinol/quinone metabolism; menaquinone biosynthesis; menaquinol from 1,4-dihydroxy-2-naphthoate: step 2/2. It functions in the pathway cofactor biosynthesis; ubiquinone biosynthesis. In terms of biological role, methyltransferase required for the conversion of demethylmenaquinol (DMKH2) to menaquinol (MKH2) and the conversion of 2-polyprenyl-6-methoxy-1,4-benzoquinol (DDMQH2) to 2-polyprenyl-3-methyl-6-methoxy-1,4-benzoquinol (DMQH2). In Brucella canis (strain ATCC 23365 / NCTC 10854 / RM-666), this protein is Ubiquinone/menaquinone biosynthesis C-methyltransferase UbiE.